The following is a 156-amino-acid chain: Arginine repressor (156 aa).

This sequence belongs to the ArgR family.

It localises to the cytoplasm. The protein operates within amino-acid biosynthesis; L-arginine biosynthesis [regulation]. Its function is as follows. Regulates arginine biosynthesis genes. This Yersinia enterocolitica serotype O:8 / biotype 1B (strain NCTC 13174 / 8081) protein is Arginine repressor.